The sequence spans 307 residues: Ribonuclease Z (307 aa).

The Zn(2+) site is built by His-63, His-65, Asp-67, His-68, His-141, Asp-212, and His-270. Asp-67 (proton acceptor) is an active-site residue.

The protein belongs to the RNase Z family. Homodimer. The cofactor is Zn(2+).

The catalysed reaction is Endonucleolytic cleavage of RNA, removing extra 3' nucleotides from tRNA precursor, generating 3' termini of tRNAs. A 3'-hydroxy group is left at the tRNA terminus and a 5'-phosphoryl group is left at the trailer molecule.. Zinc phosphodiesterase, which displays some tRNA 3'-processing endonuclease activity. Probably involved in tRNA maturation, by removing a 3'-trailer from precursor tRNA. The sequence is that of Ribonuclease Z from Bacillus cereus (strain ATCC 10987 / NRS 248).